A 269-amino-acid chain; its full sequence is Type II methyltransferase M2.LlaDCHI (269 aa).

This sequence belongs to the N(4)/N(6)-methyltransferase family.

It catalyses the reaction a 2'-deoxyadenosine in DNA + S-adenosyl-L-methionine = an N(6)-methyl-2'-deoxyadenosine in DNA + S-adenosyl-L-homocysteine + H(+). Its function is as follows. A beta subtype methylase, recognizes the double-stranded sequence 5'-GATC-3', methylates A-2 on both strands, and protects the DNA from cleavage by the LlaDCHI endonuclease. The polypeptide is Type II methyltransferase M2.LlaDCHI (Lactococcus lactis subsp. cremoris (Streptococcus cremoris)).